The chain runs to 636 residues: Chaperone protein HtpG (636 aa).

The interval 1–329 (MSKEHGAAAE…TEDLPLNISR (329 aa)) is a; substrate-binding. A b region spans residues 330–550 (ETLQENALIA…DGGMTASMEK (221 aa)). The interval 551–636 (LMRVMNKDES…TGWYAEVRKL (86 aa)) is c.

The protein belongs to the heat shock protein 90 family. Homodimer.

It localises to the cytoplasm. Its function is as follows. Molecular chaperone. Has ATPase activity. The sequence is that of Chaperone protein HtpG from Oleidesulfovibrio alaskensis (strain ATCC BAA-1058 / DSM 17464 / G20) (Desulfovibrio alaskensis).